The primary structure comprises 746 residues: Tudor domain-containing protein krimp (746 aa).

The segment at 1 to 310 (MNLEDISMIM…RDIYNQILKD (310 aa)) is involved in homooligomerization. The interval 311-489 (MAAFPENTIV…PAGITEDDMA (179 aa)) is non-canonical tudor domain. The C3H1-type zinc-finger motif lies at 511–540 (KDEQRICRHYDPKLNGCFKGNNCRFAHEPF). The Tudor domain maps to 613 to 670 (KPRLLDIVLALYSDGCFYRAQIIDEFPSEYMIFYVDYGNTEFVPLSCLAPCENVDSFK).

It belongs to the Tudor domain containing protein family. Homooligomerizes (via N-terminus). Component of the ping-pong piRNA processing (4P) complex consisting of krimp, aub and AGO3; a single molecule of krimp can bind both aub and AGO3 without the need for homooligomerization. Interacts (via canonical tudor domain) with aub (via N-terminus when symmetrically dimethylated on arginine residues). Interacts (via non-canonical tudor domain) with AGO3 (via N-terminus when unmethylated on arginine residues); this interaction leads to symmetrical dimethylation on AGO3 arginine residues and its subsequent dissociation from krimp. Krimp associated AGO3 is mostly free of piRNA binding and the interaction plays an important role in the loading of AGO3 with piRNAs; piRNA binding stimulates methylation of ACO3 by the csul/PRMT5 methylosome complex and promotes dissociation of the two proteins. As to expression, widely expressed in female germline cells, including differentiating germ cells in germarium and egg chambers (at protein level).

The protein resides in the cytoplasm. The protein localises to the perinuclear region. It localises to the cytoplasmic ribonucleoprotein granule. In terms of biological role, stable structural component of the perinuclear meiotic nuage, a germline-specific subcellular membraneless ribonucleoprotein compartment involved in production of transposable element-repressing Piwi-interacting RNA (piRNA)-induced silencing complexes (piRISCs), which are essential for maintaining germline integrity during oogenesis. Scaffold component of the ping-pong piRNA processing (4P) complex that recruits the Piwi proteins aub and AGO3 to specific subregions of the nuage where it coordinates their activity in the ping-pong amplification step of secondary piRNA biogenesis. Binds methylated aub, which is associated with piRNA, and unmethylated AGO3, which is not associated with piRNA, bringing the Piwi proteins into close proximity and facilitating the loading of freshly cut piRNAs generated by aub onto AGO3. Promotes asymmetric ping-pong amplification by aub and AGO3 to bias production towards antisense piRNAs capable of silencing transposable elements. Required for symmetrical dimethylation of AGO3, probably by recruitment to the nuage where methylosome components are located; dimethylation promotes AGO3 dissociation and interaction with other tudor-domain containing proteins such as tud. Required for the recruitment of mael to the perinuclear meiotic nuage. Required for the recruitment of aub to the nuage in testes but not in ovaries. Involved in repression of long interspersed nuclear elements (LINEs) including HeT-A, I-element LINEs and possibly mst40, but not TART LINEs. This Drosophila melanogaster (Fruit fly) protein is Tudor domain-containing protein krimp.